The chain runs to 87 residues: Homeotic protein ultrabithorax (87 aa).

The Antp-type hexapeptide signature appears at 22–27 (FYPWMA).

This sequence belongs to the Antp homeobox family. As to expression, in the embryo, expression is seen in the epidermis, somatic and visceral mesoderm, and the peripheral and central nervous system.

The protein localises to the nucleus. In terms of biological role, sequence-specific transcription factor which is part of a developmental regulatory system that provides cells with specific positional identities on the anterior-posterior axis. Binds the consensus region 5'-TTAAT[GT][GA]-3'. This homeotic protein controls development of the cells in the posterior thoracic and first abdominal segments. It activates the synthesis of the decapentaplegic (DPP) growth factor. This chain is Homeotic protein ultrabithorax (Ubx), found in Drosophila hydei (Fruit fly).